Consider the following 791-residue polypeptide: Centrosomal protein of 89 kDa (791 aa).

Residues 27 to 203 (APKPAVPRTP…HTQQKDVKHS (177 aa)) form a disordered region. The span at 30–45 (PAVPRTPPPRSPNPSP) shows a compositional bias: pro residues. Phosphoserine is present on S50. A compositionally biased stretch (low complexity) spans 50–62 (SALAAAILATTLT). The span at 75 to 89 (SRSESDASDIEKDSF) shows a compositional bias: basic and acidic residues. Residues 94–107 (ATTSELRLRQSWQN) show a composition bias toward polar residues. A compositionally biased stretch (basic and acidic residues) spans 137–161 (RESESTWKDVGDGRDATYTVPHRDQ). Residues 181–190 (SDSSSSSSSS) show a composition bias toward low complexity. 3 coiled-coil regions span residues 252-291 (SANQ…TEKA), 370-598 (LLAY…MGKE), and 670-737 (HRLK…SLLQ).

The protein localises to the cytoplasm. Its subcellular location is the cytosol. It localises to the cytoskeleton. It is found in the microtubule organizing center. The protein resides in the centrosome. The protein localises to the spindle pole. Its subcellular location is the centriole. It localises to the mitochondrion intermembrane space. Functionally, required for ciliogenesis. Also plays a role in mitochondrial metabolism where it may modulate complex IV activity. The protein is Centrosomal protein of 89 kDa (Cep89) of Mus musculus (Mouse).